The chain runs to 293 residues: Small ribosomal subunit protein uS2m (293 aa).

Over residues 21–38 (GRAAQRGRTLGSAAAAAA) the composition is skewed to low complexity. Disordered regions lie at residues 21 to 49 (GRAA…DRSA) and 263 to 293 (QGAP…GHSP). Basic and acidic residues predominate over residues 39 to 49 (REPERDSDRSA). Over residues 267-279 (GPHPANPAAPGAP) the composition is skewed to pro residues.

Belongs to the universal ribosomal protein uS2 family. Component of the mitochondrial ribosome small subunit (28S) which comprises a 12S rRNA and about 30 distinct proteins.

Its subcellular location is the mitochondrion. Functionally, required for mitoribosome formation and stability, and mitochondrial translation. In Bos taurus (Bovine), this protein is Small ribosomal subunit protein uS2m (MRPS2).